Consider the following 1389-residue polypeptide: DNA-directed RNA polymerase subunit beta'' (1389 aa).

Residues Cys-224, Cys-295, Cys-302, and Cys-305 each coordinate Zn(2+).

The protein belongs to the RNA polymerase beta' chain family. RpoC2 subfamily. In plastids the minimal PEP RNA polymerase catalytic core is composed of four subunits: alpha, beta, beta', and beta''. When a (nuclear-encoded) sigma factor is associated with the core the holoenzyme is formed, which can initiate transcription. Requires Zn(2+) as cofactor.

It localises to the plastid. It is found in the chloroplast. The catalysed reaction is RNA(n) + a ribonucleoside 5'-triphosphate = RNA(n+1) + diphosphate. Its function is as follows. DNA-dependent RNA polymerase catalyzes the transcription of DNA into RNA using the four ribonucleoside triphosphates as substrates. This is DNA-directed RNA polymerase subunit beta'' from Morus indica (Mulberry).